We begin with the raw amino-acid sequence, 436 residues long: 3-ketoacyl-CoA thiolase (436 aa).

The active-site Acyl-thioester intermediate is the C99. Residues H392 and C422 each act as proton acceptor in the active site.

It belongs to the thiolase-like superfamily. Thiolase family. As to quaternary structure, heterotetramer of two alpha chains (FadJ) and two beta chains (FadI).

Its subcellular location is the cytoplasm. The enzyme catalyses an acyl-CoA + acetyl-CoA = a 3-oxoacyl-CoA + CoA. Its pathway is lipid metabolism; fatty acid beta-oxidation. Catalyzes the final step of fatty acid oxidation in which acetyl-CoA is released and the CoA ester of a fatty acid two carbons shorter is formed. The polypeptide is 3-ketoacyl-CoA thiolase (Photobacterium profundum (strain SS9)).